A 517-amino-acid chain; its full sequence is Crotonobetaine/carnitine--CoA ligase (517 aa).

This sequence belongs to the ATP-dependent AMP-binding enzyme family.

It catalyses the reaction 4-(trimethylamino)butanoate + ATP + CoA = 4-(trimethylamino)butanoyl-CoA + AMP + diphosphate. The enzyme catalyses crotonobetaine + ATP + CoA = crotonobetainyl-CoA + AMP + diphosphate. The catalysed reaction is (R)-carnitine + ATP + CoA = (R)-carnitinyl-CoA + AMP + diphosphate. It functions in the pathway amine and polyamine metabolism; carnitine metabolism. Catalyzes the transfer of CoA to carnitine, generating the initial carnitinyl-CoA needed for the CaiB reaction cycle. Also has activity toward crotonobetaine and gamma-butyrobetaine. This is Crotonobetaine/carnitine--CoA ligase from Escherichia coli O6:K15:H31 (strain 536 / UPEC).